The following is a 211-amino-acid chain: Prolactin (211 aa).

A signal peptide spans 1-24; the sequence is MTHRRTKLFMMAAVVSYVMTSCGA. Intrachain disulfides connect C70–C184 and C201–C211.

It belongs to the somatotropin/prolactin family.

It is found in the secreted. This Paralichthys olivaceus (Bastard halibut) protein is Prolactin (prl).